The sequence spans 304 residues: uncharacterized protein (304 aa).

10 helical membrane passes run 5-25 (TIIL…FIAI), 42-62 (FLLA…PLLF), 68-88 (IFQL…ILYG), 96-116 (IASV…FIFF), 120-140 (LYFF…IILF), 150-170 (TIKG…IYLY), 178-198 (ISIL…FLVI), 215-235 (ILAT…SYFY), 245-265 (ASTI…FVWG), and 268-288 (IGID…ITIF). 2 EamA domains span residues 16–140 (ITWG…IILF) and 162–288 (TSHA…ITIF).

Belongs to the EamA transporter family.

It is found in the cell membrane. This is an uncharacterized protein from Buchnera aphidicola subsp. Schlechtendalia chinensis.